The following is a 350-amino-acid chain: tRNA dimethylallyltransferase (350 aa).

Positions 1–20 (MMNTERPAGPLRPPHPPHPP) are disordered. The segment covering 10–20 (PLRPPHPPHPP) has biased composition (pro residues). 27–34 (GPTASGKT) contacts ATP. 29 to 34 (TASGKT) is a substrate binding site. 3 interaction with substrate tRNA regions span residues 52 to 55 (DSAL), 176 to 180 (QRIAR), and 273 to 278 (RCVGYR).

This sequence belongs to the IPP transferase family. In terms of assembly, monomer. The cofactor is Mg(2+).

The enzyme catalyses adenosine(37) in tRNA + dimethylallyl diphosphate = N(6)-dimethylallyladenosine(37) in tRNA + diphosphate. Its function is as follows. Catalyzes the transfer of a dimethylallyl group onto the adenine at position 37 in tRNAs that read codons beginning with uridine, leading to the formation of N6-(dimethylallyl)adenosine (i(6)A). This chain is tRNA dimethylallyltransferase, found in Albidiferax ferrireducens (strain ATCC BAA-621 / DSM 15236 / T118) (Rhodoferax ferrireducens).